We begin with the raw amino-acid sequence, 788 residues long: Phenylalanine--tRNA ligase beta subunit (788 aa).

A tRNA-binding domain is found at 39–147 (FNVSGEIITA…DPVELGVNVV (109 aa)). A B5 domain is found at 399-472 (IEPKKVMLRK…RIYGYEKVES (74 aa)). The Mg(2+) site is built by Asp450, Asp456, Glu459, and Glu460. One can recognise an FDX-ACB domain in the interval 694-787 (PRFPAVRRDI…AEREFGIRRR (94 aa)).

Belongs to the phenylalanyl-tRNA synthetase beta subunit family. Type 1 subfamily. In terms of assembly, tetramer of two alpha and two beta subunits. The cofactor is Mg(2+).

Its subcellular location is the cytoplasm. It carries out the reaction tRNA(Phe) + L-phenylalanine + ATP = L-phenylalanyl-tRNA(Phe) + AMP + diphosphate + H(+). This Thermotoga maritima (strain ATCC 43589 / DSM 3109 / JCM 10099 / NBRC 100826 / MSB8) protein is Phenylalanine--tRNA ligase beta subunit (pheT).